Reading from the N-terminus, the 296-residue chain is CCAAT/enhancer-binding protein beta (296 aa).

A required for Lys-133 sumoylation region spans residues 1–22 (MHRLLAWDAACLPPPPAAFRPM). R3 is modified (asymmetric dimethylarginine; by CARM1). Residues 22–104 (MEVANFYYEP…YGAKPSKKPA (83 aa)) are required for MYC transcriptional repression. K39 carries the post-translational modification N6-acetyllysine; alternate. Position 39 is an N6-methylated lysine; alternate (K39). 2 positions are modified to N6-acetyllysine; by KAT2A and KAT2B: K98 and K101. K102 is subject to N6-acetyllysine; by KAT2A and KAT2B; alternate. Glycyl lysine isopeptide (Lys-Gly) (interchain with G-Cter in SUMO2); alternate cross-links involve residues K102 and K133. A Glycyl lysine isopeptide (Lys-Gly) (interchain with G-Cter in SUMO); alternate cross-link involves residue K133. Residue K144 forms a Glycyl lysine isopeptide (Lys-Gly) (interchain with G-Cter in SUMO2) linkage. Residues 171-199 (SGSSGSLSTSSSSSPPGTPSPADAKAAPA) are disordered. T179 is subject to Phosphothreonine; by GSK3-beta. O-linked (GlcNAc) serine glycans are attached at residues S180 and S181. At S184 the chain carries Phosphoserine; by GSK3-beta. T188 is subject to Phosphothreonine; by RPS6KA1, CDK2 and MAPK. Residues K211 and K213 each participate in a glycyl lysine isopeptide (Lys-Gly) (interchain with G-Cter in SUMO2) cross-link. Position 217 is a phosphothreonine; by RPS6KA1 and PKC/PRKCA (T217). The bZIP domain occupies 222-285 (SDEYKMRRER…STLRNLFKQL (64 aa)). The interval 226-246 (KMRRERNNIAVRKSRDKAKMR) is basic motif. S239 is subject to Phosphoserine; by PKC/PRKCA. Residues 248 to 255 (LETQHKVL) form a leucine-zipper region. The residue at position 276 (S276) is a Phosphoserine; by CaMK2. A Glycyl lysine isopeptide (Lys-Gly) (interchain with G-Cter in SUMO2) cross-link involves residue K283.

The protein belongs to the bZIP family. C/EBP subfamily. Binds DNA as a homodimer and as a heterodimer. Interacts with ATF4. Binds DNA as a heterodimer with ATF4. Interacts with MYB; within the complex, MYB and CEBPB bind to different promoter regions. Can form stable heterodimers with CEBPA, CEBPD and CEBPE. Interacts with SIX1. Isoform 2 and isoform 3 also form heterodimers. Interacts with TRIM28 and PTGES2. Interacts with PRDM16. Interacts with CCDC85B. Forms a complex with THOC5. Interacts with ZNF638; this interaction increases transcriptional activation. Interacts with CIDEA and CIDEC. Interaction with CIDEA increases transcriptional activation of a subset of CEBPB downstream target genes, including ID2, IGF1, PRLR, SOCS1, SOCS3, XDH. Interaction with CIDEC increases transcriptional activation of SOCS1, SOCS3, TGFB1, TGFBR1, ID2 and XDH. Interacts with DDIT3/CHOP. Interacts with EP300; recruits EP300 to chromatin. Interacts with RORA; the interaction disrupts interaction with EP300. Interacts (not methylated) with MED23, MED26, SMARCA2, SMARCB1 and SMARCC1. Interacts with KAT2A and KAT2B. Interacts with ATF5; EP300 is required for ATF5 and CEBPB interaction and DNA binding. Interacts with NFE2L1; the heterodimer represses expression of DSPP during odontoblast differentiation. Post-translationally, sumoylated by polymeric chains of SUMO2 or SUMO3. Sumoylation at Lys-133 is required for inhibition of T-cells proliferation. In adipocytes, sumoylation at Lys-133 by PIAS1 leads to ubiquitination and subsequent proteasomal degradation. Desumoylated by SENP2, which abolishes ubiquitination and stabilizes protein levels. Ubiquitinated, leading to proteasomal degradation. In terms of processing, phosphorylated at Thr-188 by MAPK and CDK2, serves to prime phosphorylation at Thr-179 and Ser-184 by GSK3B and acquire DNA-binding as well as transactivation activities, required to induce adipogenesis. MAPK and CDK2 act sequentially to maintain Thr-188 in the primed phosphorylated state during mitotical cloning expansion and thereby progression of terminal differentiation. Phosphorylation at Thr-217 enhances transactivation activity. Phosphorylation at Ser-276 in response to calcium increases transactivation activity. Phosphorylated at Thr-188 by RPS6KA1. Post-translationally, O-glycosylated, glycosylation at Ser-180 and Ser-181 prevents phosphorylation on Thr-188, Ser-184 and Thr-179 and DNA binding activity which delays the adipocyte differentiation program. Acetylated. Acetylation at Lys-39 is an important and dynamic regulatory event that contributes to its ability to transactivate target genes, including those associated with adipogenesis and adipocyte function. Deacetylation by HDAC1 represses its transactivation activity. Acetylated by KAT2A and KAT2B within a cluster of lysine residues between amino acids 98-102, this acetylation is strongly induced by glucocorticoid treatment and enhances transactivation activity. In terms of processing, methylated. Methylation at Arg-3 by CARM1 and at Lys-39 by EHMT2, inhibits transactivation activity. Methylation is probably inhibited by phosphorylation at Thr-188. In terms of tissue distribution, abundantly expressed in myoblasts. Enriched in brown adipose tissue (BAT) versus white adipose tissue (WAT). Expressed in hepatocytes (at protein level). Expressed in T lymphocytes. The expression in granulosa cells of antral follicles is induced by luteinizing hormone. Expressed in chondrocytes and osteoblasts (at protein level).

It is found in the nucleus. It localises to the cytoplasm. Functionally, important transcription factor regulating the expression of genes involved in immune and inflammatory responses. Also plays a significant role in adipogenesis, as well as in the gluconeogenic pathway, liver regeneration, and hematopoiesis. The consensus recognition site is 5'-T[TG]NNGNAA[TG]-3'. Its functional capacity is governed by protein interactions and post-translational protein modifications. During early embryogenesis, plays essential and redundant roles with CEBPA. Has a promitotic effect on many cell types such as hepatocytes and adipocytes but has an antiproliferative effect on T-cells by repressing MYC expression, facilitating differentiation along the T-helper 2 lineage. Binds to regulatory regions of several acute-phase and cytokines genes and plays a role in the regulation of acute-phase reaction and inflammation. Also plays a role in intracellular bacteria killing. During adipogenesis, is rapidly expressed and, after activation by phosphorylation, induces CEBPA and PPARG, which turn on the series of adipocyte genes that give rise to the adipocyte phenotype. The delayed transactivation of the CEBPA and PPARG genes by CEBPB appears necessary to allow mitotic clonal expansion and thereby progression of terminal differentiation. Essential for female reproduction because of a critical role in ovarian follicle development. Restricts osteoclastogenesis. Together with NFE2L1; represses expression of DSPP during odontoblast differentiation. Its function is as follows. Essential for gene expression induction in activated macrophages. Plays a major role in immune responses such as CD4(+) T-cell response, granuloma formation and endotoxin shock. Not essential for intracellular bacteria killing. In terms of biological role, acts as a dominant negative through heterodimerization with isoform 2. Promotes osteoblast differentiation and osteoclastogenesis. This is CCAAT/enhancer-binding protein beta from Mus musculus (Mouse).